Consider the following 256-residue polypeptide: Ubiquinone/menaquinone biosynthesis C-methyltransferase UbiE (256 aa).

2 residues coordinate S-adenosyl-L-methionine: Thr78 and Asp99.

The protein belongs to the class I-like SAM-binding methyltransferase superfamily. MenG/UbiE family.

The enzyme catalyses a 2-demethylmenaquinol + S-adenosyl-L-methionine = a menaquinol + S-adenosyl-L-homocysteine + H(+). It carries out the reaction a 2-methoxy-6-(all-trans-polyprenyl)benzene-1,4-diol + S-adenosyl-L-methionine = a 5-methoxy-2-methyl-3-(all-trans-polyprenyl)benzene-1,4-diol + S-adenosyl-L-homocysteine + H(+). Its pathway is quinol/quinone metabolism; menaquinone biosynthesis; menaquinol from 1,4-dihydroxy-2-naphthoate: step 2/2. The protein operates within cofactor biosynthesis; ubiquinone biosynthesis. In terms of biological role, methyltransferase required for the conversion of demethylmenaquinol (DMKH2) to menaquinol (MKH2) and the conversion of 2-polyprenyl-6-methoxy-1,4-benzoquinol (DDMQH2) to 2-polyprenyl-3-methyl-6-methoxy-1,4-benzoquinol (DMQH2). In Geobacter sulfurreducens (strain ATCC 51573 / DSM 12127 / PCA), this protein is Ubiquinone/menaquinone biosynthesis C-methyltransferase UbiE.